The sequence spans 212 residues: Large ribosomal subunit protein uL3 (212 aa).

Position 153 is an N5-methylglutamine (Q153).

It belongs to the universal ribosomal protein uL3 family. In terms of assembly, part of the 50S ribosomal subunit. Forms a cluster with proteins L14 and L19. In terms of processing, methylated by PrmB.

One of the primary rRNA binding proteins, it binds directly near the 3'-end of the 23S rRNA, where it nucleates assembly of the 50S subunit. This chain is Large ribosomal subunit protein uL3, found in Shewanella loihica (strain ATCC BAA-1088 / PV-4).